The chain runs to 167 residues: Peptide deformylase (167 aa).

The Fe cation site is built by Cys-91 and His-133. Residue Glu-134 is part of the active site. Position 137 (His-137) interacts with Fe cation.

This sequence belongs to the polypeptide deformylase family. The cofactor is Fe(2+).

The enzyme catalyses N-terminal N-formyl-L-methionyl-[peptide] + H2O = N-terminal L-methionyl-[peptide] + formate. Its function is as follows. Removes the formyl group from the N-terminal Met of newly synthesized proteins. Requires at least a dipeptide for an efficient rate of reaction. N-terminal L-methionine is a prerequisite for activity but the enzyme has broad specificity at other positions. In Chromobacterium violaceum (strain ATCC 12472 / DSM 30191 / JCM 1249 / CCUG 213 / NBRC 12614 / NCIMB 9131 / NCTC 9757 / MK), this protein is Peptide deformylase.